The chain runs to 235 residues: Cobalt transport protein CbiM (235 aa).

6 consecutive transmembrane segments (helical) span residues 6-26, 43-63, 85-105, 108-128, 133-153, and 181-201; these read GVLP…FVVH, LLLA…LPSV, MAFM…HGGI, LGAN…GAYV, LGGP…LSTY, and IFAI…ILLF.

It belongs to the CbiM family. Forms an energy-coupling factor (ECF) transporter complex composed of an ATP-binding protein (A component, CbiO), a transmembrane protein (T component, CbiQ) and 2 possible substrate-capture proteins (S components, CbiM and CbiN) of unknown stoichimetry.

The protein localises to the cell membrane. It participates in cofactor biosynthesis; adenosylcobalamin biosynthesis. Part of the energy-coupling factor (ECF) transporter complex CbiMNOQ involved in cobalt import. The polypeptide is Cobalt transport protein CbiM (Propionibacterium freudenreichii subsp. shermanii (strain ATCC 9614 / DSM 4902 / CIP 103027 / NCIMB 8099 / CIRM-BIA1)).